The sequence spans 276 residues: MTEIWNFINTGSKNPYYNMAMDEALLNFVSRGEIDPVIRFYTWNPATLSIGYFQRLQKEIDIDKVKEKGYGLVRRQTGGRGVLHDKELTYSVIVPESHPNMPSTVTEAYKIISQGLLEGFKNLGFETYFAIPRSKEERDKLKQPRSSVCFDAPSWYELVVEGRKIAGSAQTRQKGVILQHGSILQDIDIDDLFDMFKFKNERLKAKMKENFVQKAVAINDISNQHITLNEMENAFEAGFKKGLNIDFKPLELTEKQLEEVQELEDKYRSEAWMYRK.

The 216-residue stretch at 32 to 247 (GEIDPVIRFY…GFKKGLNIDF (216 aa)) folds into the BPL/LPL catalytic domain. Cysteine 149 (acyl-thioester intermediate) is an active-site residue.

This sequence belongs to the octanoyltransferase LipM family. Monomer.

It carries out the reaction octanoyl-[ACP] + L-lysyl-[protein] = N(6)-octanoyl-L-lysyl-[protein] + holo-[ACP] + H(+). It participates in protein modification; protein lipoylation via endogenous pathway; protein N(6)-(lipoyl)lysine from octanoyl-[acyl-carrier-protein]. Its function is as follows. Catalyzes the transfer of endogenously produced octanoic acid from octanoyl-acyl-carrier-protein onto the lipoyl domain of GcvH, an intermediate carrier during protein lipoylation. This chain is Octanoyltransferase LipM, found in Staphylococcus epidermidis (strain ATCC 35984 / DSM 28319 / BCRC 17069 / CCUG 31568 / BM 3577 / RP62A).